A 208-amino-acid chain; its full sequence is Protein IncB (208 aa).

In terms of biological role, this protein is thought to be cis acting and to contain the putative attachment site on the DNA for the cellular partition apparatus. The protein is Protein IncB (incB) of Escherichia coli.